The chain runs to 460 residues: Nitrilase and fragile histidine triad fusion protein NitFhit (460 aa).

The CN hydrolase domain maps to 33 to 279; it reads ATIAVGQMRS…LDIGTAEVDL (247 aa). Catalysis depends on residues glutamate 72, lysine 142, and cysteine 183. An HIT domain is found at 315-422; it reads DRPFATNIVD…MPRRLGDFGH (108 aa). The Histidine triad motif signature appears at 407 to 411; that stretch reads HVHFH. Histidine 409 acts as the Tele-AMP-histidine intermediate in catalysis.

The protein in the N-terminal section; belongs to the UPF0012 family. In terms of assembly, homotetramer. The cofactor is Mn(2+).

It carries out the reaction P(1),P(3)-bis(5'-adenosyl) triphosphate + H2O = AMP + ADP + 2 H(+). Its function is as follows. Cleaves A-5'-PPP-5'A to yield AMP and ADP. In Drosophila melanogaster (Fruit fly), this protein is Nitrilase and fragile histidine triad fusion protein NitFhit.